The chain runs to 444 residues: U-box domain-containing protein 31 (444 aa).

One can recognise a U-box domain in the interval 59 to 133 (EIPSVFICPI…YTWFSQKYVL (75 aa)). 2 ARM repeats span residues 301–340 (KQVR…SLCL) and 343–382 (EGRI…SVCK).

It carries out the reaction S-ubiquitinyl-[E2 ubiquitin-conjugating enzyme]-L-cysteine + [acceptor protein]-L-lysine = [E2 ubiquitin-conjugating enzyme]-L-cysteine + N(6)-ubiquitinyl-[acceptor protein]-L-lysine.. It functions in the pathway protein modification; protein ubiquitination. Its function is as follows. Functions as an E3 ubiquitin ligase. This chain is U-box domain-containing protein 31 (PUB31), found in Arabidopsis thaliana (Mouse-ear cress).